We begin with the raw amino-acid sequence, 402 residues long: Zinc finger CCHC domain-containing protein 12 (402 aa).

Residues 268–277 (DTPDDSDEDV) show a composition bias toward acidic residues. Residues 268–342 (DTPDDSDEDV…PGNMRRTRKR (75 aa)) are disordered. Residues 311 to 323 (SPNNSQFPSPCTS) show a composition bias toward polar residues. A CCHC-type zinc finger spans residues 346-363 (IRCSYCGEEGHSKETCDN). The segment covering 383–392 (HTEERSREAP) has biased composition (basic and acidic residues). Residues 383–402 (HTEERSREAPVEPSDPCELQ) are disordered.

Belongs to the ZCCHC12 family. Interacts with SMAD1 and CREB-binding protein (CBP). Forms a protein-DNA complex through its association with SMAD1.

Transcriptional coactivator in the bone morphogenetic protein (BMP)-signaling pathway. It positively modulates BMP signaling by interacting with SMAD1 and associating with CBP in the transcription complex. It contributes to the BMP-induced enhancement of cholinergic-neuron-specific gene expression. The protein is Zinc finger CCHC domain-containing protein 12 (ZCCHC12) of Bos taurus (Bovine).